Consider the following 144-residue polypeptide: Histone H3.1 (144 aa).

Residues 1 to 45 form a disordered region; sequence MARTKQSARKTTGGKAPRKQLSAKSARKGVSPASSAGAKKSRYRP. K5 is modified (N6,N6,N6-trimethyllysine; alternate). At K5 the chain carries N6,N6-dimethyllysine; alternate. K5 and K10 each carry N6-methyllysine; alternate. K10, K15, K19, K24, K28, and K39 each carry N6-acetyllysine; alternate. Residue K15 is modified to N6,N6-dimethyllysine; alternate. N6-methyllysine; alternate is present on residues K19, K24, K28, and K39. K28 and K39 each carry N6,N6,N6-trimethyllysine; alternate. Residues K28 and K39 each carry the N6,N6-dimethyllysine; alternate modification. K58 carries the post-translational modification N6-acetyllysine.

The protein belongs to the histone H3 family. As to quaternary structure, the nucleosome is a histone octamer containing two molecules each of H2A, H2B, H3 and H4 assembled in one H3-H4 heterotetramer and two H2A-H2B heterodimers. The octamer wraps approximately 147 bp of DNA. Mono-, di- and trimethylated to form H3K4me1/2/3. H3K4me activates gene expression by regulating transcription elongation and plays a role in telomere length maintenance. H3K4me enrichment correlates with transcription levels, and occurs in a 5' to 3' gradient with H3K4me3 enrichment at the 5'-end of genes, shifting to H3K4me2 and then H3K4me1. H3K36me represses gene expression. Post-translationally, acetylation of histone H3 leads to transcriptional activation.

It is found in the nucleus. The protein resides in the chromosome. In terms of biological role, core component of nucleosome. Nucleosomes wrap and compact DNA into chromatin, limiting DNA accessibility to the cellular machineries which require DNA as a template. Histones thereby play a central role in transcription regulation, DNA repair, DNA replication and chromosomal stability. DNA accessibility is regulated via a complex set of post-translational modifications of histones, also called histone code, and nucleosome remodeling. This Encephalitozoon cuniculi (strain GB-M1) (Microsporidian parasite) protein is Histone H3.1 (HHT1).